A 242-amino-acid polypeptide reads, in one-letter code: Biosynthetic peptidoglycan transglycosylase (242 aa).

Residues 19-39 (LLLACAVLWGGGVALFSIVPV) traverse the membrane as a helical segment.

The protein belongs to the glycosyltransferase 51 family.

The protein resides in the cell inner membrane. It catalyses the reaction [GlcNAc-(1-&gt;4)-Mur2Ac(oyl-L-Ala-gamma-D-Glu-L-Lys-D-Ala-D-Ala)](n)-di-trans,octa-cis-undecaprenyl diphosphate + beta-D-GlcNAc-(1-&gt;4)-Mur2Ac(oyl-L-Ala-gamma-D-Glu-L-Lys-D-Ala-D-Ala)-di-trans,octa-cis-undecaprenyl diphosphate = [GlcNAc-(1-&gt;4)-Mur2Ac(oyl-L-Ala-gamma-D-Glu-L-Lys-D-Ala-D-Ala)](n+1)-di-trans,octa-cis-undecaprenyl diphosphate + di-trans,octa-cis-undecaprenyl diphosphate + H(+). The protein operates within cell wall biogenesis; peptidoglycan biosynthesis. In terms of biological role, peptidoglycan polymerase that catalyzes glycan chain elongation from lipid-linked precursors. The protein is Biosynthetic peptidoglycan transglycosylase of Klebsiella oxytoca.